Here is a 1328-residue protein sequence, read N- to C-terminus: MKNKKKIKNKISYSLLERELMGSRENEIAPEDCASFLSRITYSWTQKMLIYGYFNTLQLKDVPDLPESIKVENTTPILDEFKFKKNEKFGLVWFIYKRFVMVRHKTSIIVQIFSAIVSVLSPLCLRAFILYVQREPSEKSFLVGLFYAVLVLMGALFLSISLQHTYWYTMKCGLEVKGALTSKIYSKTLKLSNYGKRLYSSGTILNLISSDCQNFADYFWIDYLILLVAPIQIIALLALLCWTIGYSGLVGFLIMILSLPLSTFLSSKVSKYQLLSLKYSDKRCNLISEMINGIYLLKLYNWELFFINRIEKQRKQQLINLYKRMAFWALDKMVVQISSALVLVSSFTVYTLIANKSITYEVAFTSISIFSNLREPCELLPQAIQRLLSLLPSSDRICKFLYETSEIIENLSTITTTNGTNQDILITNGTFDWNDNNKNINVGVDSQENKNDDDDMIELVNNDSIETTTSYVLDDINFIAPAGKLTIICGVVGSGKSSLINGLIGEIYKVSGQVTIPNTVSFTNQQPFLVNSTLRENILFGLPMDMDRYKKVLESCSLLTDLQSMPGKDLTEIGERGINLSGGQKQRINLARALYSNSDCYILDEPLSAVDPQVATHLFNHCIQGELMNNKTRILVTHQLQFIPSADHIVVLENGILTQGTYQELKDKFDFESIMKTKKLNLELNNSNNNNNNNNNKEEEEDVENLEKEQQQQVINVNDVISNEFESKNDELNSKLLVNEERETGSVELNIYKMYIKYGSSFIFFFTMIMMYIISQLLFLLFDYWLTIWSDEKKNKNGTKGDSFYILYYLLLVGLFSVFLGIRYFMILHFTNSSSKNLHDKLLKSIGYASCQFFDINSSGRINNRFTKDIAEVDLILMVLSDALYCGSTVLVAVLMMIVINPLIVFPFLLLALFYYLVQKLYRSSSLELKRLENISRSPIFSILSESFNGLITIRSFRQQSRFIKRMQDSINVNLRLFYYNFSAHRWIGIKIEIISSAAVFLSAFFSLFNSNTGLSVLAVTTSLSLTGYLNWCIRQYIEFSMKMSSVERIENYINQPREGDTMNVDMELESNLPINWPQKGEIQFKNVEIKYRPNLKPSLKNISFDIKSNEKIGIVGKSGSGKSTTMLALFRMIECSKGSIHIDGIDISKISLSKLRNSIGICPQEPFIFSGTIRKNIDPFGIYSDSEIWLALEKVKLKETISLLPMKIDTIIHEQANLSFGQKQLLCLTRVLLKSPKLVFFDEHSSSIDYFTAHQLNISVKENITNSTTLTIAHRIDTIIDSDRILVIDSGELIEIFDKNNINNNINNQNSKFKKFVQHTSDHFKNY.

In terms of domain architecture, ABC transmembrane type-1 1 spans 104–389; the sequence is HKTSIIVQIF…LPQAIQRLLS (286 aa). The next 6 helical transmembrane spans lie at 112-132, 140-160, 224-244, 245-265, 287-307, and 333-353; these read IFSA…ILYV, SFLV…FLSI, LILL…CWTI, GYSG…STFL, ISEM…LFFI, and MVVQ…YTLI. In terms of domain architecture, ABC transporter 1 spans 457 to 678; it reads IELVNNDSIE…FDFESIMKTK (222 aa). ATP is bound at residue 490–497; it reads GVVGSGKS. Over residues 684 to 695 the composition is skewed to low complexity; it reads LNNSNNNNNNNN. A disordered region spans residues 684 to 708; sequence LNNSNNNNNNNNNKEEEEDVENLEK. 5 consecutive transmembrane segments (helical) span residues 762–782, 802–822, 894–914, 988–1008, and 1014–1034; these read FIFF…FLLF, DSFY…FLGI, VLMM…LALF, IGIK…FFSL, and GLSV…NWCI. Residues 765-1046 enclose the ABC transmembrane type-1 2 domain; it reads FFTMIMMYII…YIEFSMKMSS (282 aa). The ABC transporter 2 domain maps to 1083–1316; the sequence is IQFKNVEIKY…INNQNSKFKK (234 aa). An ATP-binding site is contributed by 1117-1124; the sequence is GKSGSGKS.

This sequence belongs to the ABC transporter superfamily. ABCC family. Conjugate transporter (TC 3.A.1.208) subfamily.

It is found in the membrane. The protein is ABC transporter C family member 7 (abcC7) of Dictyostelium discoideum (Social amoeba).